The primary structure comprises 206 residues: Ribosomal RNA large subunit methyltransferase E (206 aa).

Gly-61, Trp-63, Asp-81, Asp-97, and Asp-122 together coordinate S-adenosyl-L-methionine. Lys-162 (proton acceptor) is an active-site residue.

The protein belongs to the class I-like SAM-binding methyltransferase superfamily. RNA methyltransferase RlmE family.

The protein localises to the cytoplasm. It carries out the reaction uridine(2552) in 23S rRNA + S-adenosyl-L-methionine = 2'-O-methyluridine(2552) in 23S rRNA + S-adenosyl-L-homocysteine + H(+). Functionally, specifically methylates the uridine in position 2552 of 23S rRNA at the 2'-O position of the ribose in the fully assembled 50S ribosomal subunit. The polypeptide is Ribosomal RNA large subunit methyltransferase E (Neisseria meningitidis serogroup C / serotype 2a (strain ATCC 700532 / DSM 15464 / FAM18)).